The primary structure comprises 1071 residues: Methionine S-methyltransferase (1071 aa).

Alanine 2 is modified (N-acetylalanine).

This sequence belongs to the class I-like SAM-binding methyltransferase superfamily. Homotetramer. As to expression, expressed in roots, rosette leaves and cauline leaves. Expressed at a lower level in developing seeds.

It is found in the cytoplasm. The catalysed reaction is L-methionine + S-adenosyl-L-methionine = S-methyl-L-methionine + S-adenosyl-L-homocysteine. Functionally, catalyzes the S-methylmethionine (SMM) biosynthesis from adenosyl-L-homocysteine (AdoMet) and methionine. SMM biosynthesis (by MMT1) and degradation (by HMT-1, HMT-2 and HMT-3) constitute the SMM cycle in plants, which is probably required to achieve short term control of AdoMet level. Also able to catalyze the selenium-methylmethionine (SeMM) from AdoMet and selenium-methionine (SeMet). May play a role in phoem sulfur transport; such function is however not essential. This chain is Methionine S-methyltransferase (MMT1), found in Arabidopsis thaliana (Mouse-ear cress).